Consider the following 249-residue polypeptide: Tryptophan synthase alpha chain (249 aa).

Residues Glu-43 and Asp-54 each act as proton acceptor in the active site.

The protein belongs to the TrpA family. In terms of assembly, tetramer of two alpha and two beta chains.

It carries out the reaction (1S,2R)-1-C-(indol-3-yl)glycerol 3-phosphate + L-serine = D-glyceraldehyde 3-phosphate + L-tryptophan + H2O. The protein operates within amino-acid biosynthesis; L-tryptophan biosynthesis; L-tryptophan from chorismate: step 5/5. Functionally, the alpha subunit is responsible for the aldol cleavage of indoleglycerol phosphate to indole and glyceraldehyde 3-phosphate. This chain is Tryptophan synthase alpha chain, found in Campylobacter jejuni subsp. jejuni serotype O:23/36 (strain 81-176).